The chain runs to 47 residues: MKFFMVLLPASLASTSLAILDVESGLLPQLSVLLSNRLRGKTCQTGP.

The signal sequence occupies residues M1–A18.

This sequence belongs to the PP3/GlyCAM-1 family. As to expression, expressed in cells harvested from milk of lactating women. Not found in other tissues.

This is Putative glycosylation-dependent cell adhesion molecule 1 (GLYCAM1) from Homo sapiens (Human).